Consider the following 433-residue polypeptide: Pyrimidine-nucleoside phosphorylase (433 aa).

A phosphate-binding site is contributed by 81 to 83 (KHS). K(+)-binding residues include glycine 88 and threonine 90. Phosphate is bound by residues threonine 92, 108-110 (KMS), and threonine 120. Substrate-binding residues include arginine 168 and lysine 187. K(+) is bound by residues leucine 243, alanine 246, and glutamate 255.

It belongs to the thymidine/pyrimidine-nucleoside phosphorylase family. As to quaternary structure, homodimer. K(+) is required as a cofactor.

The catalysed reaction is uridine + phosphate = alpha-D-ribose 1-phosphate + uracil. It catalyses the reaction thymidine + phosphate = 2-deoxy-alpha-D-ribose 1-phosphate + thymine. It carries out the reaction 2'-deoxyuridine + phosphate = 2-deoxy-alpha-D-ribose 1-phosphate + uracil. Functionally, catalyzes phosphorolysis of the pyrimidine nucleosides uridine, thymidine and 2'-deoxyuridine with the formation of the corresponding pyrimidine base and ribose-1-phosphate. This Staphylococcus aureus (strain MSSA476) protein is Pyrimidine-nucleoside phosphorylase (pdp).